The following is a 198-amino-acid chain: Recombination protein RecR (198 aa).

The C4-type zinc-finger motif lies at 57–72; the sequence is CSVCGHITDRDPCYIC. Residues 80–175 form the Toprim domain; that stretch reads SVVCVVQEPK…KVTRIAHGLP (96 aa).

This sequence belongs to the RecR family.

May play a role in DNA repair. It seems to be involved in an RecBC-independent recombinational process of DNA repair. It may act with RecF and RecO. The chain is Recombination protein RecR from Bacillus mycoides (strain KBAB4) (Bacillus weihenstephanensis).